We begin with the raw amino-acid sequence, 293 residues long: Probable adenylate kinase 1, chloroplastic (293 aa).

The N-terminal 26 residues, 1–26 (MAAVQRLLRASASGGAAAAAAAARRR), are a transit peptide targeting the mitochondrion. 70 to 75 (GVGKGT) contributes to the ATP binding site. Positions 90 to 119 (ATGDLVRDELASSGPLSVQLAEIVNQGKLV) are NMP. Residues threonine 91, arginine 96, 117–119 (KLV), 147–150 (GFPR), and glutamine 154 contribute to the AMP site. The tract at residues 183 to 231 (GRRICGQCGKNFNLACIDVKGENGLPPIYMAPLLPPNNCMSKLITRADD) is LID. Residues arginine 184 and 193-194 (NF) contribute to the ATP site. 2 residues coordinate AMP: arginine 228 and arginine 239.

It belongs to the adenylate kinase family.

Its subcellular location is the mitochondrion. The enzyme catalyses AMP + ATP = 2 ADP. Its function is as follows. Catalyzes the reversible transfer of the terminal phosphate group between ATP and AMP. Plays an important role in cellular energy homeostasis and in adenine nucleotide metabolism. The polypeptide is Probable adenylate kinase 1, chloroplastic (Oryza sativa subsp. japonica (Rice)).